The primary structure comprises 60 residues: Large ribosomal subunit protein bL32 (60 aa).

Residues 1–16 are compositionally biased toward basic residues; the sequence is MAVPRRKTSPSRRGMR. Residues 1 to 60 form a disordered region; that stretch reads MAVPRRKTSPSRRGMRRSADAIKKPTYVEDKDSGELRRPHHLDLKTGMYKGRQVLKKKES. A compositionally biased stretch (basic and acidic residues) spans 17 to 44; it reads RSADAIKKPTYVEDKDSGELRRPHHLDL.

This sequence belongs to the bacterial ribosomal protein bL32 family.

In Bradyrhizobium diazoefficiens (strain JCM 10833 / BCRC 13528 / IAM 13628 / NBRC 14792 / USDA 110), this protein is Large ribosomal subunit protein bL32.